Here is a 493-residue protein sequence, read N- to C-terminus: Alginate production protein AlgE (493 aa).

Positions 1–25 are cleaved as a signal peptide; it reads MKLNPLMAAGMGLGFTLFWACPTLA. Residues 93 to 111 show a composition bias toward polar residues; the sequence is DPLEQSNSDGSGTQTSRGT. A disordered region spans residues 93–115; it reads DPLEQSNSDGSGTQTSRGTASER.

This sequence belongs to the AlgE family.

It localises to the cell outer membrane. Its pathway is glycan biosynthesis; alginate biosynthesis. Functionally, has non-porin-like, channel-forming properties and probably functions as an alginate permeability pore. This is Alginate production protein AlgE (algE) from Pseudomonas syringae pv. tomato (strain ATCC BAA-871 / DC3000).